The chain runs to 430 residues: Carbamoyl phosphate synthase small chain, chloroplastic (430 aa).

A chloroplast-targeting transit peptide spans 1 to 35 (MAMATRTLGFVLPTSLSSQPSFDRRGGGFRVSVIR). The 187-residue stretch at 243 to 429 (KVIAYDFGIK…IELMKRSKQS (187 aa)) folds into the Glutamine amidotransferase type-1 domain. Cys318 acts as the Nucleophile in catalysis. Active-site residues include His402 and Glu404.

It belongs to the CarA family. Heterodimer composed of 2 chains; the small (or glutamine) chain promotes the hydrolysis of glutamine to ammonia, which is used by the large (or ammonia) chain to synthesize carbamoyl phosphate.

It is found in the plastid. It localises to the chloroplast. It catalyses the reaction hydrogencarbonate + L-glutamine + 2 ATP + H2O = carbamoyl phosphate + L-glutamate + 2 ADP + phosphate + 2 H(+). The enzyme catalyses L-glutamine + H2O = L-glutamate + NH4(+). Its pathway is amino-acid biosynthesis; L-arginine biosynthesis; carbamoyl phosphate from bicarbonate: step 1/1. It participates in pyrimidine metabolism; UMP biosynthesis via de novo pathway; (S)-dihydroorotate from bicarbonate: step 1/3. Functionally, small subunit of the arginine-specific carbamoyl phosphate synthase (CPSase). CPSase catalyzes the formation of carbamoyl phosphate from the ammonia moiety of glutamine, carbonate, and phosphate donated by ATP, the first step of the arginine biosynthetic pathway. The small subunit (glutamine amidotransferase) binds and cleaves glutamine to supply the large subunit with the substrate ammonia. This Arabidopsis thaliana (Mouse-ear cress) protein is Carbamoyl phosphate synthase small chain, chloroplastic (CARA).